Reading from the N-terminus, the 252-residue chain is 5'-nucleotidase SurE (252 aa).

Residues Asp-8, Asp-9, Ser-40, and Asn-92 each coordinate a divalent metal cation.

This sequence belongs to the SurE nucleotidase family. It depends on a divalent metal cation as a cofactor.

The protein localises to the cytoplasm. It carries out the reaction a ribonucleoside 5'-phosphate + H2O = a ribonucleoside + phosphate. Nucleotidase that shows phosphatase activity on nucleoside 5'-monophosphates. This Mesorhizobium japonicum (strain LMG 29417 / CECT 9101 / MAFF 303099) (Mesorhizobium loti (strain MAFF 303099)) protein is 5'-nucleotidase SurE.